A 455-amino-acid polypeptide reads, in one-letter code: Bifunctional protein GlmU (455 aa).

The segment at 1–225 (MNIVILAAGL…EWETLGVNSK (225 aa)) is pyrophosphorylase. Residues 6-9 (LAAG), lysine 20, glutamine 71, 76-77 (GT), 98-100 (YGD), glycine 135, glutamate 150, asparagine 165, and asparagine 223 contribute to the UDP-N-acetyl-alpha-D-glucosamine site. Aspartate 100 serves as a coordination point for Mg(2+). Asparagine 223 contacts Mg(2+). Residues 226 to 246 (VQLAELERIHQRNLAQQLLED) form a linker region. The N-acetyltransferase stretch occupies residues 247–455 (GVTLIDPARI…QRPVKQKKDA (209 aa)). Residues arginine 329 and lysine 347 each contribute to the UDP-N-acetyl-alpha-D-glucosamine site. The active-site Proton acceptor is the histidine 359. Residues tyrosine 362 and asparagine 373 each contribute to the UDP-N-acetyl-alpha-D-glucosamine site. Acetyl-CoA contacts are provided by residues alanine 376, 382–383 (NY), serine 401, alanine 419, and arginine 436.

The protein in the N-terminal section; belongs to the N-acetylglucosamine-1-phosphate uridyltransferase family. It in the C-terminal section; belongs to the transferase hexapeptide repeat family. In terms of assembly, homotrimer. Requires Mg(2+) as cofactor.

The protein localises to the cytoplasm. The catalysed reaction is alpha-D-glucosamine 1-phosphate + acetyl-CoA = N-acetyl-alpha-D-glucosamine 1-phosphate + CoA + H(+). The enzyme catalyses N-acetyl-alpha-D-glucosamine 1-phosphate + UTP + H(+) = UDP-N-acetyl-alpha-D-glucosamine + diphosphate. It participates in nucleotide-sugar biosynthesis; UDP-N-acetyl-alpha-D-glucosamine biosynthesis; N-acetyl-alpha-D-glucosamine 1-phosphate from alpha-D-glucosamine 6-phosphate (route II): step 2/2. It functions in the pathway nucleotide-sugar biosynthesis; UDP-N-acetyl-alpha-D-glucosamine biosynthesis; UDP-N-acetyl-alpha-D-glucosamine from N-acetyl-alpha-D-glucosamine 1-phosphate: step 1/1. The protein operates within bacterial outer membrane biogenesis; LPS lipid A biosynthesis. Functionally, catalyzes the last two sequential reactions in the de novo biosynthetic pathway for UDP-N-acetylglucosamine (UDP-GlcNAc). The C-terminal domain catalyzes the transfer of acetyl group from acetyl coenzyme A to glucosamine-1-phosphate (GlcN-1-P) to produce N-acetylglucosamine-1-phosphate (GlcNAc-1-P), which is converted into UDP-GlcNAc by the transfer of uridine 5-monophosphate (from uridine 5-triphosphate), a reaction catalyzed by the N-terminal domain. In Ralstonia nicotianae (strain ATCC BAA-1114 / GMI1000) (Ralstonia solanacearum), this protein is Bifunctional protein GlmU.